Reading from the N-terminus, the 335-residue chain is Glutamyl-tRNA reductase (335 aa).

Substrate is bound by residues 60-63 (TCHR), S110, 115-117 (ETE), and Q121. C61 functions as the Nucleophile in the catalytic mechanism. Position 189-194 (189-194 (GYSEIN)) interacts with NADP(+).

This sequence belongs to the glutamyl-tRNA reductase family. Homodimer.

It catalyses the reaction (S)-4-amino-5-oxopentanoate + tRNA(Glu) + NADP(+) = L-glutamyl-tRNA(Glu) + NADPH + H(+). It functions in the pathway porphyrin-containing compound metabolism; protoporphyrin-IX biosynthesis; 5-aminolevulinate from L-glutamyl-tRNA(Glu): step 1/2. In terms of biological role, catalyzes the NADPH-dependent reduction of glutamyl-tRNA(Glu) to glutamate 1-semialdehyde (GSA). This is Glutamyl-tRNA reductase from Chlamydia trachomatis serovar A (strain ATCC VR-571B / DSM 19440 / HAR-13).